The sequence spans 502 residues: UTP--glucose-1-phosphate uridylyltransferase 2 (502 aa).

The disordered stretch occupies residues 1-20 (MMKPDLNSPLPQSPQLQAFG). Positions 9–20 (PLPQSPQLQAFG) are enriched in polar residues. UTP-binding positions include 114–117 (LNGG), Lys128, Gln191, and Gly220. A substrate-binding site is contributed by 116-117 (GG). Substrate is bound by residues His221 and 249-251 (NVD). Positions 251 and 390 each coordinate UTP.

This sequence belongs to the UDPGP type 1 family.

The catalysed reaction is alpha-D-glucose 1-phosphate + UTP + H(+) = UDP-alpha-D-glucose + diphosphate. Its function is as follows. Plays a central role as a glucosyl donor in cellular metabolic pathways. The polypeptide is UTP--glucose-1-phosphate uridylyltransferase 2 (ugpB) (Dictyostelium discoideum (Social amoeba)).